Consider the following 243-residue polypeptide: Uridylate kinase (243 aa).

An ATP-binding site is contributed by 15–18 (KMSG). Glycine 57 serves as a coordination point for UMP. 2 residues coordinate ATP: glycine 58 and arginine 62. UMP contacts are provided by residues aspartate 77 and 138-145 (TGNPLVTT). Residues threonine 165, asparagine 166, tyrosine 171, and aspartate 174 each coordinate ATP.

It belongs to the UMP kinase family. In terms of assembly, homohexamer.

It is found in the cytoplasm. It catalyses the reaction UMP + ATP = UDP + ADP. Its pathway is pyrimidine metabolism; CTP biosynthesis via de novo pathway; UDP from UMP (UMPK route): step 1/1. With respect to regulation, inhibited by UTP. Functionally, catalyzes the reversible phosphorylation of UMP to UDP. The sequence is that of Uridylate kinase from Coxiella burnetii (strain RSA 493 / Nine Mile phase I).